The chain runs to 823 residues: Ankyrin repeat domain-containing protein 20A1 (823 aa).

ANK repeat units lie at residues 66 to 95 (QHRT…QIDV), 99 to 128 (ENRT…NPNL), 132 to 161 (YGNT…HIEA), 165 to 194 (DNNT…SSHA), and 198 to 227 (LRRS…DVFA). Disordered stretches follow at residues 301–343 (VPEK…EVED) and 355–402 (VQTL…LSEN). The segment covering 372–384 (QERHERSEKKQPQ) has biased composition (basic and acidic residues). Coiled-coil stretches lie at residues 431–480 (KKLK…KQLE), 565–724 (EMIT…NNST), and 776–805 (LVLE…EKTE).

The protein is Ankyrin repeat domain-containing protein 20A1 (ANKRD20A1) of Homo sapiens (Human).